The following is a 1036-amino-acid chain: KAT8 regulatory NSL complex subunit 1 (1036 aa).

Lys104 is modified (N6-acetyllysine). 2 disordered regions span residues 145-211 (GQTA…CTLP) and 226-257 (NSTA…SSSN). Over residues 226 to 244 (NSTANKSSVNSMDQPALQG) the composition is skewed to polar residues. Positions 245–256 (SSRLSPSTDSSS) are enriched in low complexity. A Phosphoserine modification is found at Ser249. Residue Lys262 forms a Glycyl lysine isopeptide (Lys-Gly) (interchain with G-Cter in SUMO2) linkage. Ser268 carries the post-translational modification Phosphoserine. The stretch at 285–312 (TALLRRQADIEIRARRLQKRLQVVQAKQ) forms a coiled coil. A Glycyl lysine isopeptide (Lys-Gly) (interchain with G-Cter in SUMO2) cross-link involves residue Lys331. Disordered stretches follow at residues 399–423 (DSDV…RADP) and 739–787 (SPSY…RRRG). A compositionally biased stretch (low complexity) spans 759–772 (STSSDTSTPTSSGS). The required for activation of KAT8 histone acetyltransferase activity stretch occupies residues 781–813 (PVRRRRGESSFDINNIVIPMSVAATTRVEKLQY). The PEHE domain maps to 815 to 966 (EILTPSWREV…GLDEQSVQPW (152 aa)). Residues 841–859 (EDLSDAAFAALHAKCEEME) form an interaction with KAT8 HAT domain region. The tract at residues 869–931 (VPPQRRGSRS…SPISPELHSA (63 aa)) is disordered. Polar residues predominate over residues 886-896 (TTPQLGSANPS). A compositionally biased stretch (low complexity) spans 906-919 (SSSHSLSEFSHGQS). A phosphoserine mark is found at Ser922 and Ser925. Phosphothreonine is present on Thr934. Ser976 bears the Phosphoserine mark. Positions 989-1020 (DTAARCTRRTSGSKTGREAEVAPTSPPVVPLK) are disordered.

In terms of assembly, component of the NSL complex at least composed of MOF/KAT8, KANSL1, KANSL2, KANSL3, MCRS1, PHF20, OGT1/OGT, WDR5 and HCFC1. Interacts (via PEHE domain) with KAT8 (via HAT domain); the interaction is direct. Component of some MLL1/MLL complex, at least composed of the core components KMT2A/MLL1, ASH2L, HCFC1, WDR5 and RBBP5, as well as the facultative components BACC1, CHD8, E2F6, HSP70, INO80C, KANSL1, LAS1L, MAX, MCRS1, MGA, KAT8/MOF, PELP1, PHF20, PRP31, RING2, RUVB1/TIP49A, RUVB2/TIP49B, SENP3, TAF1, TAF4, TAF6, TAF7, TAF9 and TEX10.

It localises to the nucleus. The protein resides in the chromosome. The protein localises to the centromere. It is found in the kinetochore. Its subcellular location is the mitochondrion. It localises to the cytoplasm. The protein resides in the cytoskeleton. The protein localises to the spindle pole. Its function is as follows. Non-catalytic component of the NSL histone acetyltransferase complex, a multiprotein complex that mediates histone H4 acetylation at 'Lys-5'- and 'Lys-8' (H4K5ac and H4K8ac) at transcription start sites and promotes transcription initiation. The NSL complex also acts as a regulator of gene expression in mitochondria. In addition to its role in transcription, KANSL1 also plays an essential role in spindle assembly during mitosis. Associates with microtubule ends and contributes to microtubule stability. The protein is KAT8 regulatory NSL complex subunit 1 (Kansl1) of Mus musculus (Mouse).